Reading from the N-terminus, the 844-residue chain is Protein translocase subunit SecA (844 aa).

ATP is bound by residues Q87, G105 to T109, and D495. Positions Q783 to K800 are enriched in basic and acidic residues. The segment at Q783–A844 is disordered. Residues L802–T811 show a composition bias toward polar residues. The span at P816–R826 shows a compositional bias: basic and acidic residues. Zn(2+) contacts are provided by C830, C832, C841, and C842.

Belongs to the SecA family. In terms of assembly, monomer and homodimer. Part of the essential Sec protein translocation apparatus which comprises SecA, SecYEG and auxiliary proteins SecDF-YajC and YidC. Requires Zn(2+) as cofactor.

The protein resides in the cell inner membrane. It localises to the cytoplasm. It catalyses the reaction ATP + H2O + cellular proteinSide 1 = ADP + phosphate + cellular proteinSide 2.. Functionally, part of the Sec protein translocase complex. Interacts with the SecYEG preprotein conducting channel. Has a central role in coupling the hydrolysis of ATP to the transfer of proteins into and across the cell membrane, serving as an ATP-driven molecular motor driving the stepwise translocation of polypeptide chains across the membrane. In Nitratidesulfovibrio vulgaris (strain DSM 19637 / Miyazaki F) (Desulfovibrio vulgaris), this protein is Protein translocase subunit SecA.